A 356-amino-acid polypeptide reads, in one-letter code: D-alanine--D-alanine ligase (356 aa).

Residues 146-350 (KKLLVAEGLP…YAELLDTLIQ (205 aa)) enclose the ATP-grasp domain. ATP is bound at residue 173–228 (KERLGLPVFVKPARGGSSIGVSKVSAWEDLEAALTLAYESDDKVLIEPEISGAEVE). D305, E317, and N319 together coordinate Mg(2+).

This sequence belongs to the D-alanine--D-alanine ligase family. Requires Mg(2+) as cofactor. Mn(2+) serves as cofactor.

The protein resides in the cytoplasm. The enzyme catalyses 2 D-alanine + ATP = D-alanyl-D-alanine + ADP + phosphate + H(+). It participates in cell wall biogenesis; peptidoglycan biosynthesis. Cell wall formation. This is D-alanine--D-alanine ligase from Corynebacterium aurimucosum (strain ATCC 700975 / DSM 44827 / CIP 107346 / CN-1) (Corynebacterium nigricans).